The primary structure comprises 286 residues: ATP synthase gamma chain (286 aa).

It belongs to the ATPase gamma chain family. F-type ATPases have 2 components, CF(1) - the catalytic core - and CF(0) - the membrane proton channel. CF(1) has five subunits: alpha(3), beta(3), gamma(1), delta(1), epsilon(1). CF(0) has three main subunits: a, b and c.

The protein localises to the cell inner membrane. Produces ATP from ADP in the presence of a proton gradient across the membrane. The gamma chain is believed to be important in regulating ATPase activity and the flow of protons through the CF(0) complex. This is ATP synthase gamma chain from Alteromonas mediterranea (strain DSM 17117 / CIP 110805 / LMG 28347 / Deep ecotype).